We begin with the raw amino-acid sequence, 471 residues long: Anthocyanidin 3-O-glucosyltransferase (471 aa).

The Proton acceptor role is filled by H24. Residue H24 coordinates an anthocyanidin. D130 serves as the catalytic Charge relay. T152 is a binding site for UDP-alpha-D-glucose. H161 is a binding site for an anthocyanidin. 6 residues coordinate UDP-alpha-D-glucose: A352, Q354, H369, W372, S374, and E377. G392 contributes to the an anthocyanidin binding site. UDP-alpha-D-glucose-binding residues include D393 and Q394.

This sequence belongs to the UDP-glycosyltransferase family.

The catalysed reaction is an anthocyanidin + UDP-alpha-D-glucose + H(+) = an anthocyanidin 3-O-beta-D-glucoside + UDP. It functions in the pathway pigment biosynthesis; anthocyanin biosynthesis. Its function is as follows. In the presence of other necessary color factors, this glycosylation reaction allows the accumulation of anthocyanin pigments. This chain is Anthocyanidin 3-O-glucosyltransferase (BZ1), found in Zea mays (Maize).